A 351-amino-acid chain; its full sequence is Biotin synthase (351 aa).

Residues 44–262 (NRVQVSTLLS…LAVARIMMPK (219 aa)) form the Radical SAM core domain. The [4Fe-4S] cluster site is built by cysteine 59, cysteine 63, and cysteine 66. Residues cysteine 103, cysteine 134, cysteine 194, and arginine 266 each contribute to the [2Fe-2S] cluster site.

This sequence belongs to the radical SAM superfamily. Biotin synthase family. In terms of assembly, homodimer. The cofactor is [4Fe-4S] cluster. It depends on [2Fe-2S] cluster as a cofactor.

The enzyme catalyses (4R,5S)-dethiobiotin + (sulfur carrier)-SH + 2 reduced [2Fe-2S]-[ferredoxin] + 2 S-adenosyl-L-methionine = (sulfur carrier)-H + biotin + 2 5'-deoxyadenosine + 2 L-methionine + 2 oxidized [2Fe-2S]-[ferredoxin]. It functions in the pathway cofactor biosynthesis; biotin biosynthesis; biotin from 7,8-diaminononanoate: step 2/2. Catalyzes the conversion of dethiobiotin (DTB) to biotin by the insertion of a sulfur atom into dethiobiotin via a radical-based mechanism. This is Biotin synthase from Stutzerimonas stutzeri (strain A1501) (Pseudomonas stutzeri).